Reading from the N-terminus, the 362-residue chain is 3-isopropylmalate dehydrogenase (362 aa).

NAD(+) is bound at residue 78-91; it reads GPQWDTLPSDKRPE. 4 residues coordinate substrate: Arg98, Arg108, Arg136, and Asp226. Mg(2+) contacts are provided by Asp226, Asp250, and Asp254. Residue 284–296 participates in NAD(+) binding; it reads GSAPDIAGQDKAN.

This sequence belongs to the isocitrate and isopropylmalate dehydrogenases family. LeuB type 1 subfamily. Homodimer. Requires Mg(2+) as cofactor. It depends on Mn(2+) as a cofactor.

The protein localises to the cytoplasm. The catalysed reaction is (2R,3S)-3-isopropylmalate + NAD(+) = 4-methyl-2-oxopentanoate + CO2 + NADH. It functions in the pathway amino-acid biosynthesis; L-leucine biosynthesis; L-leucine from 3-methyl-2-oxobutanoate: step 3/4. Functionally, catalyzes the oxidation of 3-carboxy-2-hydroxy-4-methylpentanoate (3-isopropylmalate) to 3-carboxy-4-methyl-2-oxopentanoate. The product decarboxylates to 4-methyl-2 oxopentanoate. The polypeptide is 3-isopropylmalate dehydrogenase (Gloeobacter violaceus (strain ATCC 29082 / PCC 7421)).